Reading from the N-terminus, the 384-residue chain is Probable L-tyrosine/L-aspartate decarboxylase (384 aa).

Position 233 is an N6-(pyridoxal phosphate)lysine (Lys-233).

The protein belongs to the group II decarboxylase family. MfnA subfamily. The cofactor is pyridoxal 5'-phosphate.

It carries out the reaction L-tyrosine + H(+) = tyramine + CO2. The catalysed reaction is L-aspartate + H(+) = beta-alanine + CO2. It functions in the pathway cofactor biosynthesis; methanofuran biosynthesis. The protein operates within cofactor biosynthesis; coenzyme A biosynthesis. Catalyzes the decarboxylation of L-tyrosine to produce tyramine for methanofuran biosynthesis. Can also catalyze the decarboxylation of L-aspartate to produce beta-alanine for coenzyme A (CoA) biosynthesis. In Methanococcus maripaludis (strain DSM 14266 / JCM 13030 / NBRC 101832 / S2 / LL), this protein is Probable L-tyrosine/L-aspartate decarboxylase.